A 546-amino-acid polypeptide reads, in one-letter code: CTP synthase (546 aa).

Positions 1–266 (MTTNYIFVTG…DDLVCQRFGI (266 aa)) are amidoligase domain. S14 lines the CTP pocket. Residue S14 coordinates UTP. ATP is bound by residues 15 to 20 (SLGKGI) and D72. Mg(2+) is bound by residues D72 and E140. CTP contacts are provided by residues 147 to 149 (DIE), 187 to 192 (KTKPTQ), and K223. Residues 187 to 192 (KTKPTQ) and K223 each bind UTP. 239–241 (KDV) is a binding site for ATP. Residues 291–542 (VIGMVGKYIE…VKAAGESVRG (252 aa)) form the Glutamine amidotransferase type-1 domain. G352 is a binding site for L-glutamine. C379 serves as the catalytic Nucleophile; for glutamine hydrolysis. Residues 380 to 383 (LGMQ), E403, and R470 each bind L-glutamine. Active-site residues include H515 and E517.

The protein belongs to the CTP synthase family. Homotetramer.

The catalysed reaction is UTP + L-glutamine + ATP + H2O = CTP + L-glutamate + ADP + phosphate + 2 H(+). The enzyme catalyses L-glutamine + H2O = L-glutamate + NH4(+). It catalyses the reaction UTP + NH4(+) + ATP = CTP + ADP + phosphate + 2 H(+). Its pathway is pyrimidine metabolism; CTP biosynthesis via de novo pathway; CTP from UDP: step 2/2. With respect to regulation, allosterically activated by GTP, when glutamine is the substrate; GTP has no effect on the reaction when ammonia is the substrate. The allosteric effector GTP functions by stabilizing the protein conformation that binds the tetrahedral intermediate(s) formed during glutamine hydrolysis. Inhibited by the product CTP, via allosteric rather than competitive inhibition. Functionally, catalyzes the ATP-dependent amination of UTP to CTP with either L-glutamine or ammonia as the source of nitrogen. Regulates intracellular CTP levels through interactions with the four ribonucleotide triphosphates. The polypeptide is CTP synthase (Aliivibrio fischeri (strain MJ11) (Vibrio fischeri)).